Here is a 762-residue protein sequence, read N- to C-terminus: MAIQTSNLGYPRIGLQREWKKTLEAFWSNKIDEEQFLTTMKEIRLQHVKVQQEKGIELIPIGDFTYYDHVLDTAYMLGFIPSRFSEFTSYLDVYFAMARGSKDHVASEMTKWFNTNYHYIVPEYEEGLQISLKDNRPLRLYEEAKQELGVDGKPVILGPYTFLKLAKGYTQEQFPTILKQLVAPYVQLLSELHAAGAPAIQVDEPIFASLTKKEVQQAKEIYEAIRKEVPNATLLLQTYFDSVEENYEEIITFPVSGIGLDFIHGKEGNLNAISKYGFPADKTLAVGCIDGRNIWRADLDEVLELFTTLQKQVQTKDIIVQPSCSLLHTPIDKTEETHLSTELFDALAFANQKLEELVLIHSALTQGTESISNELETYRNVHHTIRSSAARNREDVKAARTALKEEDFSRPLPFEKRYELQQVALELPLLPTTTIGSFPQTTEVRQTRKEWRNGVISNEQYEQFIEKETEKWIRYQEEIGLDVLVHGEFERTDMVEYFGERLAGFSFTKNGWVQSYGSRCVKPPVIYGDVAFINGMTIKETVYAQSLTEKVVKGMLTGPVTILNWSFVRNDIPRKEVSYQIALALRHEIELLESSGIRVIQVDEPALREGMPLKEKDWDAYITWAVQSFLLATSSVANETQIHTHMCYSNFEDIVDAIRALDADVISIETSRSHGEFIDTLKHTTYEKGIGLGVYDIHSPRVPSKDEMYKIVEQSLEVCDPKYFWINPDCGLKTRRTEEVIPALEHMVQAAKDARSLLKTNA.

Residues 17 to 20 and lysine 111 each bind 5-methyltetrahydropteroyltri-L-glutamate; that span reads REWK. Residues 435–437 and glutamate 488 each bind L-homocysteine; that span reads IGS. L-methionine is bound by residues 435–437 and glutamate 488; that span reads IGS. 5-methyltetrahydropteroyltri-L-glutamate is bound by residues 519-520 and tryptophan 565; that span reads RC. An L-homocysteine-binding site is contributed by aspartate 603. Residue aspartate 603 coordinates L-methionine. Glutamate 609 serves as a coordination point for 5-methyltetrahydropteroyltri-L-glutamate. The Zn(2+) site is built by histidine 645, cysteine 647, and glutamate 669. The Proton donor role is filled by histidine 698. Cysteine 730 contributes to the Zn(2+) binding site.

Belongs to the vitamin-B12 independent methionine synthase family. The cofactor is Zn(2+).

It carries out the reaction 5-methyltetrahydropteroyltri-L-glutamate + L-homocysteine = tetrahydropteroyltri-L-glutamate + L-methionine. Its pathway is amino-acid biosynthesis; L-methionine biosynthesis via de novo pathway; L-methionine from L-homocysteine (MetE route): step 1/1. Functionally, catalyzes the transfer of a methyl group from 5-methyltetrahydrofolate to homocysteine resulting in methionine formation. The polypeptide is 5-methyltetrahydropteroyltriglutamate--homocysteine methyltransferase (Bacillus cereus (strain ATCC 14579 / DSM 31 / CCUG 7414 / JCM 2152 / NBRC 15305 / NCIMB 9373 / NCTC 2599 / NRRL B-3711)).